We begin with the raw amino-acid sequence, 134 residues long: UPF0299 membrane protein KPK_1586 (134 aa).

The next 4 helical transmembrane spans lie at 5–25 (LTII…LYAG), 26–46 (IFIA…MLIL), 66–86 (ILIR…MQYW), and 93–113 (LGPV…VVSW).

Belongs to the UPF0299 family.

It localises to the cell inner membrane. The polypeptide is UPF0299 membrane protein KPK_1586 (Klebsiella pneumoniae (strain 342)).